The following is a 365-amino-acid chain: tRNA-specific 2-thiouridylase MnmA (365 aa).

Residues 14–21 (AMSGGVDS) and leucine 40 each bind ATP. Cysteine 108 acts as the Nucleophile in catalysis. Cysteines 108 and 204 form a disulfide. Glycine 132 contacts ATP. Residues 154 to 156 (KDQ) are interaction with tRNA. Cysteine 204 functions as the Cysteine persulfide intermediate in the catalytic mechanism.

This sequence belongs to the MnmA/TRMU family.

It is found in the cytoplasm. The catalysed reaction is S-sulfanyl-L-cysteinyl-[protein] + uridine(34) in tRNA + AH2 + ATP = 2-thiouridine(34) in tRNA + L-cysteinyl-[protein] + A + AMP + diphosphate + H(+). Its function is as follows. Catalyzes the 2-thiolation of uridine at the wobble position (U34) of tRNA, leading to the formation of s(2)U34. This is tRNA-specific 2-thiouridylase MnmA from Rickettsia rickettsii (strain Iowa).